The sequence spans 264 residues: Carbonic anhydrase 7 (264 aa).

Residues 5–262 enclose the Alpha-carbonic anhydrase domain; that stretch reads HCWGYGQDDG…LKGRVVKASF (258 aa). Histidine 66 functions as the Proton donor/acceptor in the catalytic mechanism. Residues histidine 96, histidine 98, and histidine 121 each coordinate Zn(2+). 201-202 is a binding site for substrate; sequence TT.

This sequence belongs to the alpha-carbonic anhydrase family. The cofactor is Zn(2+).

Its subcellular location is the cytoplasm. The enzyme catalyses hydrogencarbonate + H(+) = CO2 + H2O. In terms of biological role, reversible hydration of carbon dioxide. The polypeptide is Carbonic anhydrase 7 (Ca7) (Mus musculus (Mouse)).